We begin with the raw amino-acid sequence, 295 residues long: MDALALMSASNPAWSAWPAPAKLNLFLQIVGRRADGYHLLQTVFRLLDWGDTVHVRLRTDGQIQRIGASLPGVAEDDDLMVRAARALQIHAGTALGAELRVDKRIPAGGGFGGGSSDAATVLVALNALWGLGLPVDTLAELGLRLGADVPVFVRGHNAWAEGVGEKLTPISLPQAAYVLVDPGIHVPTPVLFQSQELTRDAAPAKIADFASGSLLDNAFEPVLRRREPAIEAVFQALSRIGTPRLTGSGSGCFVEFATRAAAEQAMAHLPGNLRAWVVEGAAHSPLLDALDAIQV.

Residue K22 is part of the active site. 106–116 serves as a coordination point for ATP; the sequence is PAGGGFGGGSS. D148 is an active-site residue.

It belongs to the GHMP kinase family. IspE subfamily.

The enzyme catalyses 4-CDP-2-C-methyl-D-erythritol + ATP = 4-CDP-2-C-methyl-D-erythritol 2-phosphate + ADP + H(+). Its pathway is isoprenoid biosynthesis; isopentenyl diphosphate biosynthesis via DXP pathway; isopentenyl diphosphate from 1-deoxy-D-xylulose 5-phosphate: step 3/6. Catalyzes the phosphorylation of the position 2 hydroxy group of 4-diphosphocytidyl-2C-methyl-D-erythritol. The polypeptide is 4-diphosphocytidyl-2-C-methyl-D-erythritol kinase (Xanthomonas campestris pv. campestris (strain 8004)).